Reading from the N-terminus, the 1323-residue chain is Inositol hexakisphosphate and diphosphoinositol-pentakisphosphate kinase (1323 aa).

Residue 26 to 27 (RK) coordinates substrate. ATP-binding positions include arginine 109, lysine 162, histidine 169, arginine 188, 212–215 (EEFI), and 221–223 (DVK). Residue 188-189 (RK) coordinates substrate. Residues lysine 223 and arginine 237 each contribute to the substrate site. ATP contacts are provided by residues aspartate 284 and 296 to 298 (DVN). Position 301–304 (301–304 (SFVK)) interacts with substrate. Residues 355 to 426 (TTPSGKLAEL…VLELARALVI (72 aa)) form a polyphosphoinositide-binding domain region. 2 stretches are compositionally biased toward polar residues: residues 933-947 (FNLSTNPKPATSSRS) and 977-992 (VTPTQLSTPSVTNDDL). Disordered stretches follow at residues 933 to 1022 (FNLS…SEDD), 1043 to 1107 (AMAD…GGGK), and 1134 to 1155 (IVIPTPVPSTTTAVVEDEASER). Residues 993 to 1006 (SISSNAESTAAEST) are compositionally biased toward low complexity. Over residues 1062–1074 (KSMEEGDKPHGEW) the composition is skewed to basic and acidic residues. The segment covering 1090-1101 (SNEMESNNESME) has biased composition (low complexity).

The protein belongs to the histidine acid phosphatase family. VIP1 subfamily.

Its subcellular location is the cytoplasm. It localises to the cytosol. The catalysed reaction is 1D-myo-inositol hexakisphosphate + ATP = 1-diphospho-1D-myo-inositol 2,3,4,5,6-pentakisphosphate + ADP. The enzyme catalyses 5-diphospho-1D-myo-inositol 1,2,3,4,6-pentakisphosphate + ATP + H(+) = 1,5-bis(diphospho)-1D-myo-inositol 2,3,4,6-tetrakisphosphate + ADP. Functionally, bifunctional inositol kinase that acts in concert with the IP6K kinases to synthesize the diphosphate group-containing inositol pyrophosphates diphosphoinositol pentakisphosphate, PP-InsP5, and bis-diphosphoinositol tetrakisphosphate, (PP)2-InsP4. PP-InsP5 and (PP)2-InsP4, also respectively called InsP7 and InsP8, may regulate a variety of cellular processes, including apoptosis, vesicle trafficking, cytoskeletal dynamics, and exocytosis. Phosphorylates inositol hexakisphosphate (InsP6) at position 1 to produce PP-InsP5 which is in turn phosphorylated by IP6Ks to produce (PP)2-InsP4. Alternatively, phosphorylates PP-InsP5 at position 1, produced by IP6Ks from InsP6, to produce (PP)2-InsP4. This chain is Inositol hexakisphosphate and diphosphoinositol-pentakisphosphate kinase, found in Caenorhabditis elegans.